The sequence spans 401 residues: MAKVVLAYSGGLDTSVAIPWLKENYGYEVIAMSADLGQGEELAPLREKAIKSGASKIYIEDVRREFVEDYIFPTLKAGAVYEGKYLLGTSMARPLIAKKLVEIARKEGAEAVAHGATGKGNDQVRFELAVKALAPDLKIIAPWREWDIRSREDAVDYASARGIPVPVTRERPYSLDRNLWHLSHEGADLEDPGNEPPSDVLLLITPPEKAPDKPAYVKIEFERGVPVKLDGEALDPVTLIERLNKIAGENGVGIADMVENRLVGMKSRGVYETPGGTVLFLAHRELELLTLDRATLHFKEIVASRYAELVYDGMWFVPLREALDAFVDVTQRTVTGTVVMKLYKGNCTPAGVKSPYSLYDQELSTFGRDEIYNQRDAEGFINLFGLPLKVRALMEKKAGLR.

Residues 7–15 (AYSGGLDTS) and Ala34 contribute to the ATP site. Residues Tyr85 and Ser90 each coordinate L-citrulline. Gly115 is an ATP binding site. 3 residues coordinate L-aspartate: Thr117, Asn121, and Asp122. Asn121 lines the L-citrulline pocket. 5 residues coordinate L-citrulline: Arg125, Ser174, Ser183, Glu259, and Tyr271.

It belongs to the argininosuccinate synthase family. Type 1 subfamily. Homotetramer.

It localises to the cytoplasm. The catalysed reaction is L-citrulline + L-aspartate + ATP = 2-(N(omega)-L-arginino)succinate + AMP + diphosphate + H(+). It functions in the pathway amino-acid biosynthesis; L-arginine biosynthesis; L-arginine from L-ornithine and carbamoyl phosphate: step 2/3. The polypeptide is Argininosuccinate synthase (Pelotomaculum thermopropionicum (strain DSM 13744 / JCM 10971 / SI)).